A 41-amino-acid chain; its full sequence is Photosystem II reaction center protein Y (41 aa).

N-formylmethionine is present on methionine 1. Residues 1 to 4 (MDWR) lie on the Lumenal side of the membrane. A helical transmembrane segment spans residues 5-23 (VLVVLLPVLLAAGWAVRNI). Residues 24–41 (LPYAVKQVQKLLQKAKAA) are Cytoplasmic-facing.

This sequence belongs to the PsbY family. PSII is composed of 1 copy each of membrane proteins PsbA, PsbB, PsbC, PsbD, PsbE, PsbF, PsbH, PsbI, PsbJ, PsbK, PsbL, PsbM, PsbT, PsbX, PsbY, PsbZ, Psb30/Ycf12, peripheral proteins PsbO, CyanoQ (PsbQ), PsbU, PsbV and a large number of cofactors. It forms dimeric complexes. This protein is only loosely associated with PSII, and is not often found in crystals. Found on the exterior of the PSII dimer, near cytochrome b559 (psbE and psbF). The cofactor is PSII binds multiple chlorophylls, carotenoids and specific lipids..

The protein localises to the cellular thylakoid membrane. Loosely associated component of the core of photosystem II, it is not always seen in crystals. PSII is a light-driven water plastoquinone oxidoreductase, using light energy to abstract electrons from H(2)O, generating a proton gradient subsequently used for ATP formation. The polypeptide is Photosystem II reaction center protein Y (Thermosynechococcus vestitus (strain NIES-2133 / IAM M-273 / BP-1)).